Here is a 197-residue protein sequence, read N- to C-terminus: 3-isopropylmalate dehydratase small subunit (197 aa).

The protein belongs to the LeuD family. LeuD type 1 subfamily. As to quaternary structure, heterodimer of LeuC and LeuD.

It carries out the reaction (2R,3S)-3-isopropylmalate = (2S)-2-isopropylmalate. It functions in the pathway amino-acid biosynthesis; L-leucine biosynthesis; L-leucine from 3-methyl-2-oxobutanoate: step 2/4. Catalyzes the isomerization between 2-isopropylmalate and 3-isopropylmalate, via the formation of 2-isopropylmaleate. The chain is 3-isopropylmalate dehydratase small subunit from Mycobacterium sp. (strain KMS).